The following is a 957-amino-acid chain: Vacuolar membrane protease (957 aa).

The Cytoplasmic segment spans residues 1-10 (MARYNPFSFT). A helical transmembrane segment spans residues 11-31 (PGPVVFFTTVIYVGLFAALLV). Topologically, residues 32–369 (THLTVPDYPS…RVFVVFQLHT (338 aa)) are vacuolar. N-linked (GlcNAc...) asparagine glycans are attached at residues Asn-48, Asn-105, and Asn-136. Residues His-152 and Asp-164 each contribute to the Zn(2+) site. Glu-198 (proton acceptor) is an active-site residue. Zn(2+) is bound by residues Glu-199, Glu-224, and His-297. Residues 370 to 390 (LFALCVTLLVVAPITLIGLTF) form a helical membrane-spanning segment. The Cytoplasmic segment spans residues 391–423 (GLSKADKNYLLARKAFVYSSDDDNPVQLYGWRG). Residues 424–444 (FFRFPIIFISATAVVVALAYL) form a helical membrane-spanning segment. Residues 445–450 (LVRFNA) are Vacuolar-facing. The chain crosses the membrane as a helical span at residues 451 to 471 (FIIYSSPFAVWSMMLSAWFFV). Over 472 to 490 (AWFFSRGADAMRPSALQRM) the chain is Cytoplasmic. The chain crosses the membrane as a helical span at residues 491–511 (YALIWLFIGSFVLLTIVTVFV). Residues 512–521 (NNYQVVAGYP) lie on the Vacuolar side of the membrane. Residues 522-542 (ALFYFAVVFVAIMLSYLELFF) traverse the membrane as a helical segment. The Cytoplasmic portion of the chain corresponds to 543–642 (APTKSAYARH…YPGEQEWSGK (100 aa)). 2 disordered regions span residues 559-586 (SRRN…PVAD) and 603-627 (FTRY…SQRL). The span at 603–613 (FTRYGSRRDSA) shows a compositional bias: basic and acidic residues. A helical transmembrane segment spans residues 643–663 (LPSWIWIIQLLLLAPLVIVLV). Residues 664-685 (GQVALLLTSALYQTPSDGNSPL) are Vacuolar-facing. A helical membrane pass occupies residues 686-706 (FIYLAIAALSVLLLAPTGPFI). The Cytoplasmic segment spans residues 707 to 713 (HRFTYHV). The chain crosses the membrane as a helical span at residues 714 to 734 (PTFLFLVCLGTVIYNLVAFPF). Residues 735-957 (SRDHRLKVYF…LVEGFKRFEI (223 aa)) lie on the Vacuolar side of the membrane. Asn-782, Asn-818, and Asn-834 each carry an N-linked (GlcNAc...) asparagine glycan.

This sequence belongs to the peptidase M28 family. It depends on Zn(2+) as a cofactor.

The protein resides in the vacuole membrane. May be involved in vacuolar sorting and osmoregulation. This is Vacuolar membrane protease from Pyrenophora teres f. teres (strain 0-1) (Barley net blotch fungus).